The following is a 112-amino-acid chain: Thioredoxin-like protein YdfQ (112 aa).

Residues methionine 1 to arginine 107 form the Thioredoxin domain. Residues cysteine 32 and cysteine 35 are joined by a disulfide bond.

This chain is Thioredoxin-like protein YdfQ (ydfQ), found in Bacillus subtilis (strain 168).